We begin with the raw amino-acid sequence, 286 residues long: Bifunctional protein FolD (286 aa).

NADP(+)-binding positions include 168-170, Thr195, and Val236; that span reads GRG.

The protein belongs to the tetrahydrofolate dehydrogenase/cyclohydrolase family. As to quaternary structure, homodimer.

It carries out the reaction (6R)-5,10-methylene-5,6,7,8-tetrahydrofolate + NADP(+) = (6R)-5,10-methenyltetrahydrofolate + NADPH. The enzyme catalyses (6R)-5,10-methenyltetrahydrofolate + H2O = (6R)-10-formyltetrahydrofolate + H(+). The protein operates within one-carbon metabolism; tetrahydrofolate interconversion. Catalyzes the oxidation of 5,10-methylenetetrahydrofolate to 5,10-methenyltetrahydrofolate and then the hydrolysis of 5,10-methenyltetrahydrofolate to 10-formyltetrahydrofolate. In Mycolicibacterium gilvum (strain PYR-GCK) (Mycobacterium gilvum (strain PYR-GCK)), this protein is Bifunctional protein FolD.